The chain runs to 432 residues: Glutamate-1-semialdehyde 2,1-aminomutase (432 aa).

An N6-(pyridoxal phosphate)lysine modification is found at Lys-270.

The protein belongs to the class-III pyridoxal-phosphate-dependent aminotransferase family. HemL subfamily. As to quaternary structure, homodimer. Requires pyridoxal 5'-phosphate as cofactor.

The protein localises to the cytoplasm. The enzyme catalyses (S)-4-amino-5-oxopentanoate = 5-aminolevulinate. Its pathway is porphyrin-containing compound metabolism; protoporphyrin-IX biosynthesis; 5-aminolevulinate from L-glutamyl-tRNA(Glu): step 2/2. This Acinetobacter baumannii (strain ACICU) protein is Glutamate-1-semialdehyde 2,1-aminomutase.